The following is a 687-amino-acid chain: Complement C1s subcomponent (687 aa).

Positions 1–15 (MWCIVLLSLLAWVDA) are cleaved as a signal peptide. A CUB 1 domain is found at 16-130 (EPTMYGEILS…TGFAAYYVAV (115 aa)). Positions 60, 68, 113, 131, 132, and 134 each coordinate Ca(2+). C65 and C83 are oxidised to a cystine. In terms of domain architecture, EGF-like; calcium-binding spans 131-172 (DVNECTDFADSPCSHFCNNYIGGYFCSCPPEYFLHEDKKNCG). 3 cysteine pairs are disulfide-bonded: C135–C147, C143–C156, and C158–C171. Residues N149, Y150, and G153 each coordinate Ca(2+). N149 bears the (3R)-3-hydroxyasparagine mark. N-linked (GlcNAc...) asparagine glycosylation is present at N174. 9 disulfide bridges follow: C175-C202, C234-C251, C294-C341, C321-C354, C359-C403, C386-C421, C425-C548, C594-C617, and C626-C658. The 116-residue stretch at 175-290 (CSGDVFTTLI…KGWKFRYHGD (116 aa)) folds into the CUB 2 domain. 2 consecutive Sushi domains span residues 292–356 (IPCP…RCQP) and 357–423 (VDCG…KCVP). N-linked (GlcNAc...) asparagine glycosylation occurs at N406. A Peptidase S1 domain is found at 438 to 679 (IFGGIITKIE…YIDWIRETMQ (242 aa)). Residues H475 and D528 each act as charge relay system in the active site. The Charge relay system role is filled by S630.

Belongs to the peptidase S1 family. As to quaternary structure, C1 is a calcium-dependent trimolecular complex of C1q, C1r and C1s in the molar ration of 1:2:2. Activated C1s is an disulfide-linked heterodimer of a heavy chain and a light chain. Post-translationally, the iron and 2-oxoglutarate dependent 3-hydroxylation of aspartate and asparagine is (R) stereospecific within EGF domains.

The enzyme catalyses Cleavage of Arg-|-Ala bond in complement component C4 to form C4a and C4b, and Lys(or Arg)-|-Lys bond in complement component C2 to form C2a and C2b: the 'classical' pathway C3 convertase.. Inhibited by SERPING1. Functionally, C1s B chain is a serine protease that combines with C1q and C1r to form C1, the first component of the classical pathway of the complement system. C1r activates C1s so that it can, in turn, activate C2 and C4. Also cleaves IGFBP5 and thereby inhibits the trophic effects of IGF1. The polypeptide is Complement C1s subcomponent (Sus scrofa (Pig)).